A 496-amino-acid polypeptide reads, in one-letter code: Probable malate:quinone oxidoreductase (496 aa).

This sequence belongs to the MQO family. It depends on FAD as a cofactor.

The enzyme catalyses (S)-malate + a quinone = a quinol + oxaloacetate. It participates in carbohydrate metabolism; tricarboxylic acid cycle; oxaloacetate from (S)-malate (quinone route): step 1/1. The sequence is that of Probable malate:quinone oxidoreductase from Flavobacterium psychrophilum (strain ATCC 49511 / DSM 21280 / CIP 103535 / JIP02/86).